Reading from the N-terminus, the 100-residue chain is UPF0235 protein TC_0667 (100 aa).

It belongs to the UPF0235 family.

The protein is UPF0235 protein TC_0667 of Chlamydia muridarum (strain MoPn / Nigg).